The following is a 338-amino-acid chain: RNA 3'-terminal phosphate cyclase (338 aa).

ATP contacts are provided by residues Gln103 and 283–287; that span reads YLADQ. His308 functions as the Tele-AMP-histidine intermediate in the catalytic mechanism.

This sequence belongs to the RNA 3'-terminal cyclase family. Type 1 subfamily.

It localises to the cytoplasm. It catalyses the reaction a 3'-end 3'-phospho-ribonucleotide-RNA + ATP = a 3'-end 2',3'-cyclophospho-ribonucleotide-RNA + AMP + diphosphate. In terms of biological role, catalyzes the conversion of 3'-phosphate to a 2',3'-cyclic phosphodiester at the end of RNA. The mechanism of action of the enzyme occurs in 3 steps: (A) adenylation of the enzyme by ATP; (B) transfer of adenylate to an RNA-N3'P to produce RNA-N3'PP5'A; (C) and attack of the adjacent 2'-hydroxyl on the 3'-phosphorus in the diester linkage to produce the cyclic end product. The biological role of this enzyme is unknown but it is likely to function in some aspects of cellular RNA processing. The chain is RNA 3'-terminal phosphate cyclase from Escherichia coli O127:H6 (strain E2348/69 / EPEC).